Reading from the N-terminus, the 200-residue chain is Glycerol-3-phosphate acyltransferase (200 aa).

5 helical membrane-spanning segments follow: residues 6–26 (LTLG…AVLV), 56–76 (SAAM…YIAF), 82–102 (QVAL…PIFF), 118–138 (APIG…MVLI), and 141–161 (YSSL…WFLD).

This sequence belongs to the PlsY family. Probably interacts with PlsX.

The protein resides in the cell inner membrane. It catalyses the reaction an acyl phosphate + sn-glycerol 3-phosphate = a 1-acyl-sn-glycero-3-phosphate + phosphate. It functions in the pathway lipid metabolism; phospholipid metabolism. Its function is as follows. Catalyzes the transfer of an acyl group from acyl-phosphate (acyl-PO(4)) to glycerol-3-phosphate (G3P) to form lysophosphatidic acid (LPA). This enzyme utilizes acyl-phosphate as fatty acyl donor, but not acyl-CoA or acyl-ACP. The chain is Glycerol-3-phosphate acyltransferase from Shewanella sediminis (strain HAW-EB3).